The sequence spans 619 residues: TOX high mobility group box family member 4 (619 aa).

Disordered stretches follow at residues 153 to 227 (LGLS…QKPV) and 304 to 337 (DMDP…PPAL). Phosphothreonine is present on Thr176. 3 positions are modified to phosphoserine: Ser178, Ser181, and Ser182. Residues 183–193 (LHEDGVEEFRR) are compositionally biased toward basic and acidic residues. Positions 208–218 (KQKAPKKRKKK) are enriched in basic residues. The short motif at 213–218 (KKRKKK) is the Nuclear localization signal element. Residues 223 to 291 (PQKPVSAYAL…EYLKALAAYK (69 aa)) constitute a DNA-binding region (HMG box). The segment covering 307–319 (PAPPSQTPSPPPV) has biased composition (pro residues). At Thr313 the chain carries Phosphothreonine. Phosphoserine is present on Ser315. A compositionally biased stretch (low complexity) spans 320–337 (AAADPASPAPASTEPPAL). Arg479 is subject to Asymmetric dimethylarginine. Residues 507–529 (PPPVESSPEQPVNNSPETHTVEE) form a disordered region. Positions 512–524 (SSPEQPVNNSPET) are enriched in low complexity. A phosphoserine mark is found at Ser548, Ser550, Ser558, Ser560, and Ser565.

As to quaternary structure, component of the PNUTS-PP1 phosphatase complex, composed of PPP1R10/PNUTS, TOX4, WDR82 and PPP1CA or PPP1CB or PPP1CC. Interacts with PPP1R10/PNUTS. Interacts with FOXO1 and CREB1 (increased by cAMP); FOXO1 and CREB1 are required for full induction of TOX4-dependent activity and the interactions are inhibited by insulin.

It localises to the nucleus. The protein localises to the chromosome. Its activity is regulated as follows. In liver, recruited to target gene promoters following treatment with dexamethasone and cAMP. Binding is decreased in presence of insulin. Transcription factor that modulates cell fate reprogramming from the somatic state to the pluripotent and neuronal fate. In liver, controls the expression of hormone-regulated gluconeogenic genes such as G6PC1 and PCK1. This regulation is independent of the insulin receptor activation. Also acts as a regulatory component of protein phosphatase 1 (PP1) complexes. Component of the PNUTS-PP1 protein phosphatase complex, a PP1 complex that regulates RNA polymerase II transcription pause-release. PNUTS-PP1 also plays a role in the control of chromatin structure and cell cycle progression during the transition from mitosis into interphase. The chain is TOX high mobility group box family member 4 (TOX4) from Bos taurus (Bovine).